The chain runs to 323 residues: MFARQTFRCAQPLRQSFRKYSTEAPKAKSLAPIYTAVGLTGLSVGLYRYYYGAGATAEAPVERAKVFTGGDQGWVDLKLSEIEVLSHNTKRLRFEFEDKEAVSGVTIASALLTKFKPVGAEKAVLRPYTPTSDEDQPGYLDLVVKVYPNGPMSEHLHSMNVDQRLSFKGPLPKYQWETNKHEHIALIAGGTGITPMYQLIRQIFKNPDDKTKVTLVYGNVTEDDILLKKELQDLENTYPQRFKAFYLLDKPPKEWTGGKGYINKELLKTVLPEPKEENQKIFVCGPPGLYNAVSGNKVSPKDQGELSGILKELGYNKDQVYKF.

Residues 30–46 (LAPIYTAVGLTGLSVGL) form a helical membrane-spanning segment. An FAD-binding FR-type domain is found at 72–177 (QGWVDLKLSE…KGPLPKYQWE (106 aa)). 180-215 (KHEHIALIAGGTGITPMYQLIRQIFKNPDDKTKVTL) serves as a coordination point for FAD.

Belongs to the flavoprotein pyridine nucleotide cytochrome reductase family. FAD is required as a cofactor.

The protein resides in the mitochondrion outer membrane. It catalyses the reaction 2 Fe(III)-[cytochrome b5] + NADH = 2 Fe(II)-[cytochrome b5] + NAD(+) + H(+). In terms of biological role, may mediate the reduction of outer membrane cytochrome b5. The polypeptide is NADH-cytochrome b5 reductase 2 (mcr1) (Aspergillus oryzae (strain ATCC 42149 / RIB 40) (Yellow koji mold)).